The chain runs to 319 residues: Ferrochelatase (319 aa).

Positions 193 and 274 each coordinate Fe cation.

It belongs to the ferrochelatase family.

Its subcellular location is the cytoplasm. It carries out the reaction heme b + 2 H(+) = protoporphyrin IX + Fe(2+). It functions in the pathway porphyrin-containing compound metabolism; protoheme biosynthesis; protoheme from protoporphyrin-IX: step 1/1. In terms of biological role, catalyzes the ferrous insertion into protoporphyrin IX. The sequence is that of Ferrochelatase from Actinobacillus pleuropneumoniae serotype 7 (strain AP76).